Here is a 307-residue protein sequence, read N- to C-terminus: Small ribosomal subunit biogenesis GTPase RsgA (307 aa).

The region spanning 85–242 (RQDAWKTKLI…LIDSPGLQEF (158 aa)) is the CP-type G domain. GTP is bound by residues 135-138 (NKAD) and 184-192 (GQSGMGKST). Zn(2+) is bound by residues Cys266, Cys271, His273, and Cys279.

The protein belongs to the TRAFAC class YlqF/YawG GTPase family. RsgA subfamily. Monomer. Associates with 30S ribosomal subunit, binds 16S rRNA. Zn(2+) serves as cofactor.

The protein resides in the cytoplasm. In terms of biological role, one of several proteins that assist in the late maturation steps of the functional core of the 30S ribosomal subunit. Helps release RbfA from mature subunits. May play a role in the assembly of ribosomal proteins into the subunit. Circularly permuted GTPase that catalyzes slow GTP hydrolysis, GTPase activity is stimulated by the 30S ribosomal subunit. The chain is Small ribosomal subunit biogenesis GTPase RsgA from Neisseria meningitidis serogroup C (strain 053442).